The sequence spans 165 residues: MSATAEQNARNPKGKGGFARTVSQRKRKRLFLIGGALAVLAVAVGLMLTAFNQDIRFFRTPADLTEQDMTSGARFRLGGLVEEGSVSRTGSELRFTVTDTIKTVKVVFEGIPPDLFREGQGVVAEGRFGSDGLFRADNVLAKHDENYVPKDLANSLKKKGVWEGK.

Residues 1–29 (MSATAEQNARNPKGKGGFARTVSQRKRKR) are Cytoplasmic-facing. Residues 30–50 (LFLIGGALAVLAVAVGLMLTA) traverse the membrane as a helical; Signal-anchor for type II membrane protein segment. Topologically, residues 51-165 (FNQDIRFFRT…LKKKGVWEGK (115 aa)) are periplasmic. Heme is bound by residues His-143 and Tyr-147.

The protein belongs to the CcmE/CycJ family.

It is found in the cell inner membrane. In terms of biological role, heme chaperone required for the biogenesis of c-type cytochromes. Transiently binds heme delivered by CcmC and transfers the heme to apo-cytochromes in a process facilitated by CcmF and CcmH. The polypeptide is Cytochrome c-type biogenesis protein CcmE (Brucella canis (strain ATCC 23365 / NCTC 10854 / RM-666)).